Reading from the N-terminus, the 500-residue chain is Raftlin-2 (500 aa).

Glycine 2 is lipidated: N-myristoyl glycine. Cysteine 3 carries the S-palmitoyl cysteine lipid modification. The interval 203–236 (GHLSESGVEEEPQHESGQHQTERNSSPSYANPKR) is disordered. Basic and acidic residues predominate over residues 213–224 (EPQHESGQHQTE). A Phosphoserine modification is found at serine 404. A disordered region spans residues 406–500 (AQTPERKGSR…EEGVTQVTCM (95 aa)). Threonine 408 carries the phosphothreonine modification. The segment covering 409–424 (PERKGSRLLKGEDRNK) has biased composition (basic and acidic residues). Residues 426–438 (SSRSLGLDTNASQ) are compositionally biased toward polar residues. Serine 429 carries the post-translational modification Phosphoserine. Low complexity predominate over residues 467 to 478 (SDSFSGFSSSDS).

This sequence belongs to the raftlin family. As to expression, expressed in B-cells, heart, brain, spleen, large intestine and lung. Expressed in dendritic cells and macrophages.

Its subcellular location is the cell membrane. Its function is as follows. Upon bacterial lipopolysaccharide stimulation, mediates clathrin-dependent internalization of TLR4 in dendritic cells, resulting in activation of TICAM1-mediated signaling and subsequent IFNB1 production. May regulate B-cell antigen receptor-mediated signaling. The chain is Raftlin-2 (Rftn2) from Mus musculus (Mouse).